We begin with the raw amino-acid sequence, 140 residues long: Small ribosomal subunit protein uS12 (140 aa).

Disordered stretches follow at residues 1–20 (MPTI…VKSD) and 35–55 (QTNV…TMTP). D102 carries the post-translational modification 3-methylthioaspartic acid. The disordered stretch occupies residues 121–140 (DGRMQGRSKYGTKRPKAAKK). Residues 130 to 140 (YGTKRPKAAKK) show a composition bias toward basic residues.

It belongs to the universal ribosomal protein uS12 family. Part of the 30S ribosomal subunit. Contacts proteins S8 and S17. May interact with IF1 in the 30S initiation complex.

With S4 and S5 plays an important role in translational accuracy. Its function is as follows. Interacts with and stabilizes bases of the 16S rRNA that are involved in tRNA selection in the A site and with the mRNA backbone. Located at the interface of the 30S and 50S subunits, it traverses the body of the 30S subunit contacting proteins on the other side and probably holding the rRNA structure together. The combined cluster of proteins S8, S12 and S17 appears to hold together the shoulder and platform of the 30S subunit. The protein is Small ribosomal subunit protein uS12 of Exiguobacterium sp. (strain ATCC BAA-1283 / AT1b).